Reading from the N-terminus, the 370-residue chain is Ubiquitin carboxyl-terminal hydrolase 12 (370 aa).

A Required for plasma membrane localization of USP12/WDR20 motif is present at residues 1-4 (MEIL). Positions 39–369 (FGLVNFGNTC…SGYILFYQSR (331 aa)) constitute a USP domain. Cysteine 48 (nucleophile) is an active-site residue. Positions 145-169 (KQEKQNGRLPNGNIDNENNNSTPDP) are disordered. The span at 157-168 (NIDNENNNSTPD) shows a compositional bias: polar residues. Zn(2+) is bound by residues cysteine 186, cysteine 189, cysteine 233, and cysteine 236. Residue histidine 317 is the Proton acceptor of the active site.

The protein belongs to the peptidase C19 family. USP12/USP46 subfamily. As to quaternary structure, interacts with WDR48. Interacts with WDR20; this interaction promotes translocation of the USP12 complex to the plasma membrane. Component of the USP12-WDR20-WDR48 deubiquitinating complex. Component of the USP12-DMWD-WDR48 deubiquitinating complex. Interacts with PHLPP1. Interacts with RBPJ. Interacts with CBP; this interaction blocks the acetyltransferase activity of CREBBP. Interacts with ITCH; the interaction is more efficient when both USP12 and WDR48/UAF1 are involved and may mediate recruitment of the USP12 deubiquitinating complex to Notch. Interacts with OPTN and SQSTM1/p62; the interaction is independent of deubiquitinase activity and may be involved in regulation of autophagic flux. (Microbial infection) Interacts with Epstein-Barr virus protein EBNA3.

Its subcellular location is the nucleus. It is found in the cytoplasm. It localises to the cell membrane. It carries out the reaction Thiol-dependent hydrolysis of ester, thioester, amide, peptide and isopeptide bonds formed by the C-terminal Gly of ubiquitin (a 76-residue protein attached to proteins as an intracellular targeting signal).. With respect to regulation, activated by interaction with WDR20, WDR48 and DMWD through different allosteric mechanisms. Deubiquitinating enzyme that plays various roles in the regulation of the immune response and inflammation. During TCR engagement and activation, translocates into the cytoplasm and deubiquitinates its substrates LAT and TRAT1 and prevents their lysosome-dependent degradation to stabilize the TCR signaling complex at the plasma membrane. Plays an essential role in the selective LPS-induced macrophage response through the activation of NF-kappa-B pathway. In addition, promotes that antiviral immune response through targeting DNA sensor IFI16 to inhibit its proteasome-dependent degradation. Participates in the interferon signaling pathway and antiviral response independently of its deubiquitinase activity by maintaining nuclear phosphorylated STAT1 levels via inhibition of its CREBBP-mediated acetylation and subsequent dephosphorylation. Plays an intrinsic role in promoting the differentiation, activation and proliferation of CD4(+) T-cell by activating the NF-kappa-B signaling pathway through deubiquitinating and stabilizing B-cell lymphoma/leukemia 10/BCL10. In myeloid-derived suppressor cells promotes the activation of the NF-kappa-B via deubiquitination and stabilization of RELA. Regulates the 'Lys-63'-linked polyubiquitin chains of BAX and thereby modulates the mitochondrial apoptotic process. Negative regulator of NOTCH signaling that specifically deubiquitinates non-activated NOTCH receptors to target them for lysosomal degradation; deubiquitination of NOTCH stimulates its transport form late endosomes to lysosomes. Protects neurons against HTT/huntingtin-induced polyglutamine expansion-dependent neurodegeneration through regulation of autophagic flux. This function is independent of deubiquitinase activity or of other components of the USP12-WDR20-WDR48 deubiquitinating complex. In complex with WDR48, acts as a potential tumor suppressor by positively regulating PHLPP1 stability. Functionally, (Microbial infection) Forms a complex with Epstein-Barr virus protein EBNA3 which is an active deubiquitinase activity that may select specific substrates to promote B-lymphocyte transformation. The chain is Ubiquitin carboxyl-terminal hydrolase 12 (USP12) from Homo sapiens (Human).